A 274-amino-acid chain; its full sequence is 2,3,4,5-tetrahydropyridine-2,6-dicarboxylate N-succinyltransferase (274 aa).

2 residues coordinate substrate: R107 and D144.

Belongs to the transferase hexapeptide repeat family. Homotrimer.

The protein resides in the cytoplasm. The enzyme catalyses (S)-2,3,4,5-tetrahydrodipicolinate + succinyl-CoA + H2O = (S)-2-succinylamino-6-oxoheptanedioate + CoA. It functions in the pathway amino-acid biosynthesis; L-lysine biosynthesis via DAP pathway; LL-2,6-diaminopimelate from (S)-tetrahydrodipicolinate (succinylase route): step 1/3. This chain is 2,3,4,5-tetrahydropyridine-2,6-dicarboxylate N-succinyltransferase, found in Paracoccus denitrificans (strain Pd 1222).